The sequence spans 1129 residues: Serine/threonine-protein kinase 11-interacting protein (1129 aa).

LRR repeat units lie at residues 107–128, 130–150, 162–183, 185–206, 208–229, 232–253, 254–275, and 279–300; these read SLRS…RSVY, QLEV…IALC, VLHT…LELL, SLKI…LKVL, ELQY…SVGN, KLHS…ENLP, NLQH…SGLA, and NLKQ…RALT. 4 disordered regions span residues 335–392, 428–475, 654–678, and 696–724; these read RLQP…RRGQ, DPEY…HVAP, GDIY…NHTG, and NPTG…GLAA. Over residues 337–355 the composition is skewed to polar residues; sequence QPSSSATESSCTGDLTDSY. Residues 365-374 show a composition bias toward basic residues; it reads LPRKKSRVKV. Positions 381–391 are enriched in basic and acidic residues; that stretch reads ERSDSEYERRG. Residues 436 to 447 show a composition bias toward pro residues; it reads HSPPPRASPSPT. The span at 448–458 shows a compositional bias: low complexity; the sequence is APSSVPKQKSP.

This sequence belongs to the STK11IP family.

The protein resides in the cytoplasm. This Xenopus tropicalis (Western clawed frog) protein is Serine/threonine-protein kinase 11-interacting protein (stk11ip).